Here is a 205-residue protein sequence, read N- to C-terminus: Small ribosomal subunit protein uS4 (205 aa).

Residues 1–16 show a composition bias toward basic and acidic residues; sequence MSKRESAKHKIDRRLG. The disordered stretch occupies residues 1–46; the sequence is MSKRESAKHKIDRRLGENIWGRPKSPVNRREYGPGQHGQRRKGKLS. The 64-residue stretch at 94–157 folds into the S4 RNA-binding domain; that stretch reads SRLDAVVYRA…KQLAIVLEAV (64 aa).

The protein belongs to the universal ribosomal protein uS4 family. As to quaternary structure, part of the 30S ribosomal subunit. Contacts protein S5. The interaction surface between S4 and S5 is involved in control of translational fidelity.

In terms of biological role, one of the primary rRNA binding proteins, it binds directly to 16S rRNA where it nucleates assembly of the body of the 30S subunit. Functionally, with S5 and S12 plays an important role in translational accuracy. The polypeptide is Small ribosomal subunit protein uS4 (Brucella abortus (strain S19)).